The following is a 447-amino-acid chain: N-succinylarginine dihydrolase (447 aa).

Substrate-binding positions include 19-28 (AGLSFGNEAS), Asn-110, and 137-138 (HR). Glu-174 is a catalytic residue. Arg-212 contacts substrate. Residue His-248 is part of the active site. Residues Asp-250 and Asn-359 each contribute to the substrate site. Residue Cys-365 is the Nucleophile of the active site.

Belongs to the succinylarginine dihydrolase family. In terms of assembly, homodimer.

The enzyme catalyses N(2)-succinyl-L-arginine + 2 H2O + 2 H(+) = N(2)-succinyl-L-ornithine + 2 NH4(+) + CO2. Its pathway is amino-acid degradation; L-arginine degradation via AST pathway; L-glutamate and succinate from L-arginine: step 2/5. Catalyzes the hydrolysis of N(2)-succinylarginine into N(2)-succinylornithine, ammonia and CO(2). This Escherichia coli O1:K1 / APEC protein is N-succinylarginine dihydrolase.